A 170-amino-acid chain; its full sequence is NADH-quinone oxidoreductase subunit B (170 aa).

[4Fe-4S] cluster is bound by residues C46, C47, C111, and C141.

This sequence belongs to the complex I 20 kDa subunit family. NDH-1 is composed of 14 different subunits. Subunits NuoB, C, D, E, F, and G constitute the peripheral sector of the complex. Requires [4Fe-4S] cluster as cofactor.

The protein localises to the cell membrane. It carries out the reaction a quinone + NADH + 5 H(+)(in) = a quinol + NAD(+) + 4 H(+)(out). In terms of biological role, NDH-1 shuttles electrons from NADH, via FMN and iron-sulfur (Fe-S) centers, to quinones in the respiratory chain. The immediate electron acceptor for the enzyme in this species is believed to be a menaquinone. Couples the redox reaction to proton translocation (for every two electrons transferred, four hydrogen ions are translocated across the cytoplasmic membrane), and thus conserves the redox energy in a proton gradient. The polypeptide is NADH-quinone oxidoreductase subunit B (Geobacillus thermodenitrificans (strain NG80-2)).